Consider the following 564-residue polypeptide: MHYRFLRDSFVGRVTYHLSKHKYFAHPEEAKDYIVPEKYLADYKPTLADDTSINFEKEEIDNQGEPNSSQSSSSNNTIVDNNNNNDNDVDGDKIVVTWDGDDDPENPQNWPTLQKAFFIFQISFLTTSVYMGSAVYTPGIEELMHDFGIGRVVATLPLTLFVIGYGVGPLVFSPMSENAIFGRTSIYIITLFLFVILQIPTALVNNIAGLCILRFLGGFFASPCLATGGASVADVVKFWNLPVGLAAWSLGAVCGPSFGPFFGSILTVKASWRWTFWFMCIISGFSFVMLCFTLPETFGKTLLYRKAKRLRAITGNDRITSEGEVENSKMTSHELIIDTLWRPLEITVMEPVVLLINIYIAMVYSILYLFFEVFPIYFVGVKHFTLVELGTTYMSIVIGIVIAAFIYIPVIRQKFTKPILRQEQVFPEVFIPIAIVGGILLTSGLFIFGWSANRTTHWVGPLFGAATTASGAFLIFQTLFNFMGASFKPHYIASVFASNDLFRSVIASVFPLFGAPLFDNLATPEYPVAWGSSVLGFITLVMIAIPVLFYLNGPKLRARSKYAN.

Residues 1–115 (MHYRFLRDSF…NPQNWPTLQK (115 aa)) lie on the Cytoplasmic side of the membrane. Residues 60–101 (IDNQGEPNSSQSSSSNNTIVDNNNNNDNDVDGDKIVVTWDGD) are disordered. A compositionally biased stretch (low complexity) spans 67-86 (NSSQSSSSNNTIVDNNNNND). The chain crosses the membrane as a helical span at residues 116-136 (AFFIFQISFLTTSVYMGSAVY). Residues 137 to 151 (TPGIEELMHDFGIGR) lie on the Extracellular side of the membrane. Residues 152 to 172 (VVATLPLTLFVIGYGVGPLVF) traverse the membrane as a helical segment. Residues 173–183 (SPMSENAIFGR) are Cytoplasmic-facing. Residues 184–204 (TSIYIITLFLFVILQIPTALV) traverse the membrane as a helical segment. Residues 205-206 (NN) lie on the Extracellular side of the membrane. The helical transmembrane segment at 207-227 (IAGLCILRFLGGFFASPCLAT) threads the bilayer. The Cytoplasmic portion of the chain corresponds to 228-242 (GGASVADVVKFWNLP). Residues 243–263 (VGLAAWSLGAVCGPSFGPFFG) traverse the membrane as a helical segment. Residues 264–273 (SILTVKASWR) lie on the Extracellular side of the membrane. The chain crosses the membrane as a helical span at residues 274-294 (WTFWFMCIISGFSFVMLCFTL). Residues 295–350 (PETFGKTLLYRKAKRLRAITGNDRITSEGEVENSKMTSHELIIDTLWRPLEITVME) lie on the Cytoplasmic side of the membrane. The chain crosses the membrane as a helical span at residues 351 to 371 (PVVLLINIYIAMVYSILYLFF). Over 372–390 (EVFPIYFVGVKHFTLVELG) the chain is Extracellular. The chain crosses the membrane as a helical span at residues 391 to 411 (TTYMSIVIGIVIAAFIYIPVI). The Cytoplasmic portion of the chain corresponds to 412–428 (RQKFTKPILRQEQVFPE). The helical transmembrane segment at 429–449 (VFIPIAIVGGILLTSGLFIFG) threads the bilayer. Topologically, residues 450–455 (WSANRT) are extracellular. Asn453 carries N-linked (GlcNAc...) asparagine glycosylation. Residues 456 to 476 (THWVGPLFGAATTASGAFLIF) traverse the membrane as a helical segment. The Cytoplasmic segment spans residues 477-503 (QTLFNFMGASFKPHYIASVFASNDLFR). A helical transmembrane segment spans residues 504-524 (SVIASVFPLFGAPLFDNLATP). Topologically, residues 525-528 (EYPV) are extracellular. A helical transmembrane segment spans residues 529 to 549 (AWGSSVLGFITLVMIAIPVLF). Topologically, residues 550 to 564 (YLNGPKLRARSKYAN) are cytoplasmic.

It belongs to the major facilitator superfamily. CAR1 family.

It localises to the cell membrane. In terms of biological role, plasma membrane multidrug efflux pump that confers resistance to numerous chemicals including azoles such as fluconazole, voriconazole, and benztriazoles, as well as to benomyl, cycloheximide, methotrexate, 4-nitroquinoline-N-oxide, sulfometuron methyl, cerulenin, and brefeldin A. The sequence is that of Multidrug resistance protein 1 from Candida albicans (strain SC5314 / ATCC MYA-2876) (Yeast).